The sequence spans 78 residues: Large ribosomal subunit protein eL20 (78 aa).

This sequence belongs to the eukaryotic ribosomal protein eL20 family. Part of the 50S ribosomal subunit. Binds 23S rRNA.

The protein is Large ribosomal subunit protein eL20 of Thermococcus sibiricus (strain DSM 12597 / MM 739).